The sequence spans 504 residues: Serine O-succinyltransferase (504 aa).

The N-terminal 26 residues, 1–26 (MLRASSKRLQLSWQVFRRFQSSNPQL), are a transit peptide targeting the mitochondrion. The tract at residues 49–70 (QACPNSVDPSASITSPSLSSGP) is disordered. The span at 57–70 (PSASITSPSLSSGP) shows a compositional bias: low complexity. The AB hydrolase-1 domain occupies 117-395 (NAILLHTGLS…SAEEIIKLNE (279 aa)). The segment at 124 to 127 (GLSA) is important for substrate specificity. The Nucleophile role is filled by S221. R290 serves as a coordination point for substrate. Catalysis depends on residues D443 and H480. D481 provides a ligand contact to substrate.

The protein belongs to the AB hydrolase superfamily. MetX family.

It localises to the mitochondrion. It catalyses the reaction succinyl-CoA + L-serine = O-succinyl-L-serine + CoA. The protein operates within amino-acid biosynthesis; L-cysteine biosynthesis; L-cysteine from L-serine: step 1/2. In terms of biological role, transfers a succinyl group from succinyl-CoA to L-serine, forming succinyl-L-serine. Also has weak serine acetyl transferase activity and homoserine succinyl transferase activity. The polypeptide is Serine O-succinyltransferase (Schizosaccharomyces pombe (strain 972 / ATCC 24843) (Fission yeast)).